An 81-amino-acid chain; its full sequence is MQSLQILAIVSLVVVAIIAIVVWTIVLIEYRKILRQRKIDRLFDRIREKAEDSGNESERDQEELSALVEMGHLAPWDVDDL.

Residues 1–7 lie on the Extracellular side of the membrane; that stretch reads MQSLQIL. A helical transmembrane segment spans residues 8-28; the sequence is AIVSLVVVAIIAIVVWTIVLI. The Cytoplasmic segment spans residues 29 to 81; the sequence is EYRKILRQRKIDRLFDRIREKAEDSGNESERDQEELSALVEMGHLAPWDVDDL. 2 positions are modified to phosphoserine; by host CK2: S53 and S57.

It belongs to the HIV-1 VPU protein family. Homopentamer. Interacts with host CD4 and BRTC; these interactions induce proteasomal degradation of CD4. Interacts with host BST2; this interaction leads to the degradation of host BST2. Interacts with host FBXW11. Interacts with host AP1M1; this interaction plays a role in the mistrafficking and subsequent degradation of host BST2. Interacts with host RANBP2; this interaction allows Vpu to down-regulate host BLM sumoylation. Post-translationally, phosphorylated by host CK2. This phosphorylation is necessary for interaction with human BTRC and degradation of CD4.

Its subcellular location is the host membrane. With respect to regulation, ion channel activity is inhibited by hexamethylene amiloride in vitro. Its function is as follows. Enhances virion budding by targeting host CD4 and Tetherin/BST2 to proteasome degradation. Degradation of CD4 prevents any unwanted premature interactions between viral Env and its host receptor CD4 in the endoplasmic reticulum. Degradation of antiretroviral protein Tetherin/BST2 is important for virion budding, as BST2 tethers new viral particles to the host cell membrane. Mechanistically, Vpu bridges either CD4 or BST2 to BTRC, a substrate recognition subunit of the Skp1/Cullin/F-box protein E3 ubiquitin ligase, induces their ubiquitination and subsequent proteasomal degradation. The alteration of the E3 ligase specificity by Vpu seems to promote the degradation of host IKBKB, leading to NF-kappa-B down-regulation and subsequent apoptosis. Acts as a viroporin that forms an oligomeric ion channel in membranes. Modulates the host DNA repair mechanisms to promote degradation of nuclear viral cDNA in cells that are already productively infected in order to suppress immune sensing and proviral hyper-integration (superinfection). Manipulates PML-NBs and modulates SUMOylation of host BLM protein thereby enhancing its DNA-end processing activity toward viral unintegrated linear DNA. Also inhibits RAD52-mediated homologous repair of viral cDNA, preventing the generation of dead-end circular forms of single copies of the long terminal repeat and permitting sustained nucleolytic attack. This chain is Protein Vpu, found in Homo sapiens (Human).